The chain runs to 1059 residues: Carbamoyl phosphate synthase large chain (1059 aa).

A carboxyphosphate synthetic domain region spans residues 1 to 401 (MPKRTDIKKI…SLLKACRSLE (401 aa)). Positions 129, 169, 175, 176, 208, 210, 215, 241, 242, 243, 284, and 298 each coordinate ATP. The ATP-grasp 1 domain maps to 133–327 (KQLMEDLEQP…IAKLAAKIAV (195 aa)). The Mg(2+) site is built by Gln284, Glu298, and Asn300. Mn(2+) is bound by residues Gln284, Glu298, and Asn300. The interval 402–546 (IGVYHNEMPE…YSTYEWENES (145 aa)) is oligomerization domain. The carbamoyl phosphate synthetic domain stretch occupies residues 547–929 (IKSEKESVIV…ALYKAFEASY (383 aa)). An ATP-grasp 2 domain is found at 671–861 (EQALKDLNIP…MAQIATKLIL (191 aa)). ATP-binding residues include Arg707, Ser746, Leu748, Glu752, Gly777, Val778, His779, Ser780, Gln820, and Glu832. Gln820, Glu832, and Asn834 together coordinate Mg(2+). The Mn(2+) site is built by Gln820, Glu832, and Asn834. The MGS-like domain maps to 930–1059 (FHLPAFGNVI…ESRGFITQAI (130 aa)). The segment at 930-1059 (FHLPAFGNVI…ESRGFITQAI (130 aa)) is allosteric domain.

Belongs to the CarB family. Composed of two chains; the small (or glutamine) chain promotes the hydrolysis of glutamine to ammonia, which is used by the large (or ammonia) chain to synthesize carbamoyl phosphate. Tetramer of heterodimers (alpha,beta)4. Mg(2+) serves as cofactor. Requires Mn(2+) as cofactor.

The catalysed reaction is hydrogencarbonate + L-glutamine + 2 ATP + H2O = carbamoyl phosphate + L-glutamate + 2 ADP + phosphate + 2 H(+). The enzyme catalyses hydrogencarbonate + NH4(+) + 2 ATP = carbamoyl phosphate + 2 ADP + phosphate + 2 H(+). It participates in amino-acid biosynthesis; L-arginine biosynthesis; carbamoyl phosphate from bicarbonate: step 1/1. The protein operates within pyrimidine metabolism; UMP biosynthesis via de novo pathway; (S)-dihydroorotate from bicarbonate: step 1/3. In terms of biological role, large subunit of the glutamine-dependent carbamoyl phosphate synthetase (CPSase). CPSase catalyzes the formation of carbamoyl phosphate from the ammonia moiety of glutamine, carbonate, and phosphate donated by ATP, constituting the first step of 2 biosynthetic pathways, one leading to arginine and/or urea and the other to pyrimidine nucleotides. The large subunit (synthetase) binds the substrates ammonia (free or transferred from glutamine from the small subunit), hydrogencarbonate and ATP and carries out an ATP-coupled ligase reaction, activating hydrogencarbonate by forming carboxy phosphate which reacts with ammonia to form carbamoyl phosphate. The chain is Carbamoyl phosphate synthase large chain from Streptococcus mutans serotype c (strain ATCC 700610 / UA159).